We begin with the raw amino-acid sequence, 252 residues long: C-type lectin domain family 2 member D3 (252 aa).

Residues 1–58 form a disordered region; sequence MSSSAHLQDAPPLLSGTLTQNEGQTSLRQSSSCGPSAASASESLSGYTESRIPHSKVR. Over 1-78 the chain is Cytoplasmic; the sequence is MSSSAHLQDA…ESRVKRYCCY (78 aa). Positions 16 to 29 are enriched in polar residues; the sequence is GTLTQNEGQTSLRQ. Residues 30 to 43 show a composition bias toward low complexity; the sequence is SSSCGPSAASASES. Residues 79 to 99 traverse the membrane as a helical; Signal-anchor for type II membrane protein segment; sequence GGVITVVAIAIVVPLSVTLSV. The Extracellular segment spans residues 100–252; sequence KQMEQTSINN…KPKKYISQSQ (153 aa). Residues 137 to 242 enclose the C-type lectin domain; it reads YGNKCFYFSE…VYVERPWICS (106 aa). N-linked (GlcNAc...) asparagine glycosylation is present at asparagine 150. Cysteine 158 and cysteine 241 are joined by a disulfide.

The protein localises to the cell membrane. Lectin-type cell surface receptor. The protein is C-type lectin domain family 2 member D3 (Clec2d3) of Rattus norvegicus (Rat).